The primary structure comprises 359 residues: Glycerol-3-phosphate dehydrogenase [NAD(P)+] (359 aa).

4 residues coordinate NADPH: threonine 11, tryptophan 12, arginine 32, and lysine 107. Sn-glycerol 3-phosphate-binding residues include lysine 107 and glycine 138. NADPH is bound at residue alanine 142. Sn-glycerol 3-phosphate contacts are provided by lysine 193, aspartate 246, serine 256, arginine 257, and asparagine 258. The active-site Proton acceptor is lysine 193. Arginine 257 contacts NADPH. 2 residues coordinate NADPH: valine 281 and glutamate 283.

Belongs to the NAD-dependent glycerol-3-phosphate dehydrogenase family.

The protein resides in the cytoplasm. It catalyses the reaction sn-glycerol 3-phosphate + NAD(+) = dihydroxyacetone phosphate + NADH + H(+). It carries out the reaction sn-glycerol 3-phosphate + NADP(+) = dihydroxyacetone phosphate + NADPH + H(+). Its pathway is membrane lipid metabolism; glycerophospholipid metabolism. In terms of biological role, catalyzes the reduction of the glycolytic intermediate dihydroxyacetone phosphate (DHAP) to sn-glycerol 3-phosphate (G3P), the key precursor for phospholipid synthesis. The sequence is that of Glycerol-3-phosphate dehydrogenase [NAD(P)+] from Dehalococcoides mccartyi (strain CBDB1).